The primary structure comprises 458 residues: Phosphoglucosamine mutase (458 aa).

S106 (phosphoserine intermediate) is an active-site residue. Residues S106, D247, D249, and D251 each coordinate Mg(2+). The residue at position 106 (S106) is a Phosphoserine.

It belongs to the phosphohexose mutase family. Mg(2+) serves as cofactor. Activated by phosphorylation.

The catalysed reaction is alpha-D-glucosamine 1-phosphate = D-glucosamine 6-phosphate. In terms of biological role, catalyzes the conversion of glucosamine-6-phosphate to glucosamine-1-phosphate. The chain is Phosphoglucosamine mutase from Chlamydia trachomatis serovar D (strain ATCC VR-885 / DSM 19411 / UW-3/Cx).